A 447-amino-acid polypeptide reads, in one-letter code: Cysteine--tRNA ligase (447 aa).

Cysteine 28 contacts Zn(2+). Positions 30–40 (PTVYNYIHIGN) match the 'HIGH' region motif. 3 residues coordinate Zn(2+): cysteine 211, histidine 236, and glutamate 240. The 'KMSKS' region motif lies at 268–272 (KMSKS). Lysine 271 is a binding site for ATP.

Belongs to the class-I aminoacyl-tRNA synthetase family. Monomer. Requires Zn(2+) as cofactor.

The protein localises to the cytoplasm. It catalyses the reaction tRNA(Cys) + L-cysteine + ATP = L-cysteinyl-tRNA(Cys) + AMP + diphosphate. This chain is Cysteine--tRNA ligase, found in Streptococcus pyogenes serotype M1.